The following is a 322-amino-acid chain: Acetyl-coenzyme A carboxylase carboxyl transferase subunit alpha (322 aa).

Residues 39–293 (RLASKSQQLT…KRALAESLRQ (255 aa)) form the CoA carboxyltransferase C-terminal domain.

It belongs to the AccA family. As to quaternary structure, acetyl-CoA carboxylase is a heterohexamer composed of biotin carboxyl carrier protein (AccB), biotin carboxylase (AccC) and two subunits each of ACCase subunit alpha (AccA) and ACCase subunit beta (AccD).

It is found in the cytoplasm. It carries out the reaction N(6)-carboxybiotinyl-L-lysyl-[protein] + acetyl-CoA = N(6)-biotinyl-L-lysyl-[protein] + malonyl-CoA. The protein operates within lipid metabolism; malonyl-CoA biosynthesis; malonyl-CoA from acetyl-CoA: step 1/1. Functionally, component of the acetyl coenzyme A carboxylase (ACC) complex. First, biotin carboxylase catalyzes the carboxylation of biotin on its carrier protein (BCCP) and then the CO(2) group is transferred by the carboxyltransferase to acetyl-CoA to form malonyl-CoA. The chain is Acetyl-coenzyme A carboxylase carboxyl transferase subunit alpha from Ralstonia pickettii (strain 12J).